Consider the following 225-residue polypeptide: MRILFFGPNGSGKGTQGSIVKGKYNIPHIESGAIFRENISKGTEIGKKAKEYIDRGDLVPDEITIPMILGRLQADDCGNGWLLDGFPRSKEQAIKLDEALKEAGMALDVVIEMILDRQIAKNRIMGRRLCENDNNHPNNIFIDAIKPDGDKCRVCGGALSARSDDQDEDAIDKRHNIYYDTDTGTLASAYYFKAIAEKDGSVKYITLNGEPSVPEVTDELVGKLG.

10–15 (GSGKGT) is a binding site for ATP. The tract at residues 30-59 (ESGAIFRENISKGTEIGKKAKEYIDRGDLV) is NMP. AMP-binding positions include Ser31, Arg36, 57–59 (DLV), 85–88 (GFPR), and Gln92. The LID stretch occupies residues 126 to 165 (GRRLCENDNNHPNNIFIDAIKPDGDKCRVCGGALSARSDD). Arg127 provides a ligand contact to ATP. Arg162 and Arg174 together coordinate AMP. An ATP-binding site is contributed by Pro211.

This sequence belongs to the adenylate kinase family. As to quaternary structure, monomer.

It is found in the cytoplasm. The catalysed reaction is AMP + ATP = 2 ADP. The protein operates within purine metabolism; AMP biosynthesis via salvage pathway; AMP from ADP: step 1/1. Catalyzes the reversible transfer of the terminal phosphate group between ATP and AMP. Plays an important role in cellular energy homeostasis and in adenine nucleotide metabolism. This Desulfatibacillum aliphaticivorans protein is Adenylate kinase.